Consider the following 422-residue polypeptide: Probable tRNA pseudouridine synthase D 2 (422 aa).

The Nucleophile role is filled by Asp-89. In terms of domain architecture, TRUD spans 160–371 (GAPNYFDSQR…IYSERKILSI (212 aa)).

Belongs to the pseudouridine synthase TruD family.

The catalysed reaction is uridine(13) in tRNA = pseudouridine(13) in tRNA. Could be responsible for synthesis of pseudouridine from uracil-13 in transfer RNAs. This is Probable tRNA pseudouridine synthase D 2 from Methanocaldococcus jannaschii (strain ATCC 43067 / DSM 2661 / JAL-1 / JCM 10045 / NBRC 100440) (Methanococcus jannaschii).